Here is a 968-residue protein sequence, read N- to C-terminus: RNA polymerase-associated protein RapA (968 aa).

A Helicase ATP-binding domain is found at 164 to 334; it reads EVGQRHAPRV…FARLRLLDPD (171 aa). 177-184 is an ATP binding site; sequence DEVGLGKT. The DEAH box signature appears at 280-283; sequence DEAH. Residues 490 to 664 enclose the Helicase C-terminal domain; it reads RVEWLLNYLI…ATPSEQEGLD (175 aa).

This sequence belongs to the SNF2/RAD54 helicase family. RapA subfamily. Interacts with the RNAP. Has a higher affinity for the core RNAP than for the holoenzyme. Its ATPase activity is stimulated by binding to RNAP.

In terms of biological role, transcription regulator that activates transcription by stimulating RNA polymerase (RNAP) recycling in case of stress conditions such as supercoiled DNA or high salt concentrations. Probably acts by releasing the RNAP, when it is trapped or immobilized on tightly supercoiled DNA. Does not activate transcription on linear DNA. Probably not involved in DNA repair. This Yersinia enterocolitica serotype O:8 / biotype 1B (strain NCTC 13174 / 8081) protein is RNA polymerase-associated protein RapA.